The primary structure comprises 191 residues: MYVVLEGIDGVGKSTQIELLKSAFQNALFTKEPGGTKIGETLRHIALHENLSELARAFLFLSDRAEHIESVIKPALKEKKLIISDRSLISGMAYSAFSSLELNLLATQSILPAKIILLWIDKEGLKERLSLKSLDKIENQGVEKLLHIQQKFKTHAYALKEQFGCEVLELNAKENAKNLHERISAFIQCVV.

Residue 7-14 (GIDGVGKS) participates in ATP binding.

The protein belongs to the thymidylate kinase family.

The enzyme catalyses dTMP + ATP = dTDP + ADP. Functionally, phosphorylation of dTMP to form dTDP in both de novo and salvage pathways of dTTP synthesis. The sequence is that of Thymidylate kinase from Helicobacter acinonychis (strain Sheeba).